A 125-amino-acid polypeptide reads, in one-letter code: Small ribosomal subunit protein uS13 (125 aa).

It belongs to the universal ribosomal protein uS13 family. Part of the 30S ribosomal subunit. Forms a loose heterodimer with protein S19. Forms two bridges to the 50S subunit in the 70S ribosome.

In terms of biological role, located at the top of the head of the 30S subunit, it contacts several helices of the 16S rRNA. In the 70S ribosome it contacts the 23S rRNA (bridge B1a) and protein L5 of the 50S subunit (bridge B1b), connecting the 2 subunits; these bridges are implicated in subunit movement. Contacts the tRNAs in the A and P-sites. This chain is Small ribosomal subunit protein uS13, found in Orientia tsutsugamushi (strain Ikeda) (Rickettsia tsutsugamushi).